We begin with the raw amino-acid sequence, 461 residues long: Glutamate--tRNA ligase (461 aa).

The 'HIGH' region motif lies at 8-18 (PSPTGYLHIGG). Residues 240–244 (KMSKR) carry the 'KMSKS' region motif. Lys-243 serves as a coordination point for ATP.

Belongs to the class-I aminoacyl-tRNA synthetase family. Glutamate--tRNA ligase type 1 subfamily. In terms of assembly, monomer.

It is found in the cytoplasm. The catalysed reaction is tRNA(Glu) + L-glutamate + ATP = L-glutamyl-tRNA(Glu) + AMP + diphosphate. In terms of biological role, catalyzes the attachment of glutamate to tRNA(Glu) in a two-step reaction: glutamate is first activated by ATP to form Glu-AMP and then transferred to the acceptor end of tRNA(Glu). The protein is Glutamate--tRNA ligase of Chromobacterium violaceum (strain ATCC 12472 / DSM 30191 / JCM 1249 / CCUG 213 / NBRC 12614 / NCIMB 9131 / NCTC 9757 / MK).